Reading from the N-terminus, the 343-residue chain is Major histocompatibility complex class I-related protein 1 (343 aa).

Positions 1 to 18 (MMFLLPFLTVFLAKQSHT) are cleaved as a signal peptide. The tract at residues 19 to 105 (RTHSLRYFRL…RHLQRHYNHS (87 aa)) is alpha-1. Residues 19–197 (RTHSLRYFRL…EYGSDALERT (179 aa)) are antigen-binding cleft. At 19-298 (RTHSLRYFRL…QESGNTLLVA (280 aa)) the chain is on the extracellular side. 8-(9H-purin-6-yl)-2-oxa-8-azabicyclo[3.3.1]nona-3,6-diene-4,6-dicarbaldehyde is bound by residues Y25 and R27. Residues R27, S42, and K61 each coordinate 5-(2-oxoethylideneamino)-6-(D-ribitylamino)uracil. 5-(2-oxopropylideneamino)-6-(D-ribitylamino)uracil-binding residues include R27, S42, and K61. 7-hydroxy-6-methyl-8-(1-D-ribityl)lumazine-binding residues include R27, S42, and K61. Residues K61 and H76 each coordinate 8-(9H-purin-6-yl)-2-oxa-8-azabicyclo[3.3.1]nona-3,6-diene-4,6-dicarbaldehyde. K61 provides a ligand contact to 2-amino-4-oxopteridine-6-carbaldehyde. Residue K61 coordinates pyridoxal. The N-linked (GlcNAc...) asparagine glycan is linked to N103. The interval 106 to 197 (GLHTYQRMIG…EYGSDALERT (92 aa)) is alpha-2. R112 contributes to the 8-(9H-purin-6-yl)-2-oxa-8-azabicyclo[3.3.1]nona-3,6-diene-4,6-dicarbaldehyde binding site. Residues R112, Y170, and Q171 each contribute to the 5-(2-oxoethylideneamino)-6-(D-ribitylamino)uracil site. Residues R112, Y170, and Q171 each coordinate 5-(2-oxopropylideneamino)-6-(D-ribitylamino)uracil. 3 residues coordinate 7-hydroxy-6-methyl-8-(1-D-ribityl)lumazine: R112, Y170, and Q171. 2 disulfides stabilise this stretch: C116-C179 and C218-C274. Residues 198–289 (EHPVVRTTRK…GLQMVLEAPQ (92 aa)) are alpha-3. Positions 200 to 302 (PVVRTTRKET…NTLLVANTIS (103 aa)) constitute an Ig-like C1-type domain. A connecting peptide region spans residues 290 to 298 (ESGNTLLVA). Residues 299 to 319 (NTISGTIILIIVLAGVGALIW) traverse the membrane as a helical segment. Topologically, residues 320–343 (RRRSREPKEVMYQPTQVNEGSSPS) are cytoplasmic.

As to quaternary structure, heterotrimer that consists of MR1, B2M and metabolite antigen. Major classes of metabolite ligands presented by MR1 include riboflavin-related antigens, pyrimidines and ribityl lumazines, nucleobase adducts and folate derivatives. Forms reversible covalent Schiff base complexes with microbial pyrimidine-based metabolite, which serves as a molecular switch triggering complete folding, stable association with B2M and translocation of the ternary complex from endoplasmic reticulum to the plasma membrane. Alternatively, forms non-Schiff base complexes with ribityl lumazines. On antigen-presenting cells, the ternary complex interacts with TCR on MR1-restricted T cells. Interacts with TAPBP and TAPBPL chaperones in the endoplasmic reticulum. TAPBP associated or not with MHC class I peptide loading complex binds ligand-free MR1 or MR1-B2M complex, providing for stable MR1 pools ready for metabolite antigen processing. TAPBPL interacts with MR1 in a ligand-independent way; this interaction may stabilize MR1 pool and facilitate ligand loading and dissociation. Structurally, MR1-B2M heterodimer adopts a topology similar to classical MHC class I molecules, with alpha-1 and alpha-2 domains of MR1 forming the antigen-binding cleft composed of two alpha-helices resting on a floor of 7-stranded anti-parallel beta-pleated sheet. MR1-B2M heterodimer (via alpha-helices) interacts with TCR (via CDR domains). Post-translationally, N-glycosylated. As to expression, expressed in kidney, liver, testis, spleen, thymus, brain, and heart.

The protein localises to the cell membrane. It is found in the endoplasmic reticulum membrane. The protein resides in the golgi apparatus membrane. It localises to the early endosome membrane. Its subcellular location is the late endosome membrane. Its function is as follows. Antigen-presenting molecule specialized in displaying microbial pyrimidine-based metabolites to alpha-beta T cell receptors (TCR) on innate-type mucosal-associated invariant T (MAIT) cells. In complex with B2M preferentially presents riboflavin-derived metabolites to semi-invariant TCRs on MAIT cells, guiding immune surveillance of the microbial metabolome at mucosal epithelial barriers. Signature pyrimidine-based microbial antigens are generated via non-enzymatic condensation of metabolite intermediates of the riboflavin pathway with by-products arising from other metabolic pathways such as glycolysis. Typical potent antigenic metabolites are 5-(2-oxoethylideneamino)-6-D-ribitylaminouracil (5-OE-RU) and 5-(2-oxopropylideneamino)-6-D-ribitylaminouracil (5-OP-RU), products of condensation of 5-amino-6-D-ribityaminouracil (5-A-RU) with glyoxal or methylglyoxal by-products, respectively. May present microbial antigens to various MAIT cell subsets, providing for unique recognition of diverse microbes, including pathogens that do not synthesize riboflavin. Upon antigen recognition, elicits rapid innate-type MAIT cell activation to eliminate pathogenic microbes by directly killing infected cells. During T cell development, drives thymic selection and post-thymic terminal differentiation of MAIT cells in a process dependent on commensal microflora. Acts as an immune sensor of cancer cell metabolome. May present a tumor-specific or -associated metabolite essential for cancer cell survival to a pan-cancer TCR on a non-MAIT CD8-positive T cell clone, triggering T cell-mediated killing of a wide range of cancer cell types. May present tumor-enriched pyridoxal and pyridoxal 5'-phosphate antigens, enabling preferential recognition of cancer cells. Presents nucleobase carbonyl adducts generated during oxidative stress. Captures M3Ade, a nucleobase adduct composed of one adenine modified by a malondialdehyde trimer, for recognition by MR1-restricted T cell clones expressing a polyclonal TCR repertoire. The polypeptide is Major histocompatibility complex class I-related protein 1 (Rattus norvegicus (Rat)).